A 249-amino-acid polypeptide reads, in one-letter code: Sugar fermentation stimulation protein homolog (249 aa).

Belongs to the SfsA family.

The sequence is that of Sugar fermentation stimulation protein homolog from Rhizobium rhizogenes (strain K84 / ATCC BAA-868) (Agrobacterium radiobacter).